A 230-amino-acid polypeptide reads, in one-letter code: DNA repair protein RecO (230 aa).

The protein belongs to the RecO family.

Functionally, involved in DNA repair and RecF pathway recombination. The chain is DNA repair protein RecO from Pseudoalteromonas translucida (strain TAC 125).